Consider the following 354-residue polypeptide: DNA polymerase IV (354 aa).

A UmuC domain is found at 14 to 198; sequence IIHIDMDAFF…MDIAKFHGVG (185 aa). Asp18 and Asp116 together coordinate Mg(2+). The active site involves Glu117.

The protein belongs to the DNA polymerase type-Y family. Monomer. It depends on Mg(2+) as a cofactor.

The protein localises to the cytoplasm. It carries out the reaction DNA(n) + a 2'-deoxyribonucleoside 5'-triphosphate = DNA(n+1) + diphosphate. Its function is as follows. Poorly processive, error-prone DNA polymerase involved in untargeted mutagenesis. Copies undamaged DNA at stalled replication forks, which arise in vivo from mismatched or misaligned primer ends. These misaligned primers can be extended by PolIV. Exhibits no 3'-5' exonuclease (proofreading) activity. May be involved in translesional synthesis, in conjunction with the beta clamp from PolIII. In Streptococcus sanguinis (strain SK36), this protein is DNA polymerase IV.